A 426-amino-acid polypeptide reads, in one-letter code: Ankyrin repeat-containing protein BDA1 (426 aa).

6 ANK repeats span residues 1-29 (MDSKLLLVTQSGSVDDLYSLIQAAPDILQ), 36-65 (IIHTPLHEASSAGKLDLAMELMILKPSFAK), 70-99 (YGLSPLHLAVENDQVELALELVKVDPSLVR), 104-134 (GGMTPLHLVAKKGDVDLLTDFLLACPESIKD), 138-167 (NGETILHITIMNDKYEQLKVLTGWMQKMRD), and 182-212 (GGNTVLHLAAYENNDKVVKQLVKCLSLDRNI). 4 consecutive transmembrane segments (helical) span residues 288–308 (ALLVIAALIISATFQTAAQLL), 329–349 (WGCNTVAFSIAILFSFILLPV), 355–375 (WWYFIITVPLVFSYFLLMYMM), and 380–400 (FFFLIIYEGGLFLVYLLVLYV).

The protein localises to the cell membrane. Involved in plant defense. Required for basal resistance against Pseudomonas syringae pv. tomato DC3000. Required for resistance against nonpathogenic bacteria. May be involved in signaling components that function downstream of SNC2 and upstream of NPR1 and WRKY70 to regulate defense responses. The chain is Ankyrin repeat-containing protein BDA1 from Arabidopsis thaliana (Mouse-ear cress).